A 111-amino-acid polypeptide reads, in one-letter code: Protein BEX3 (111 aa).

The interval M1 to D63 is disordered. Residues E68 to L93 form an interaction with p75NTR/NGFR region. The interaction with 14-3-3 epsilon stretch occupies residues E68–P111. The Nuclear export signal signature appears at I77–R87. A his cluster region spans residues H100–H104. C108 serves as a coordination point for Zn(2+).

Belongs to the BEX family. In terms of assembly, self-associates. Binds to the DEATH domain of p75NTR/NGFR. Interacts with 14-3-3 epsilon (YWHAE). Interacts with DIABLO/SMAC. Post-translationally, ubiquitinated. Degraded by the proteasome. Found in ovarian granulosa cells, testis, prostate and seminal vesicle tissue. High levels also detected in liver.

It localises to the nucleus. Its subcellular location is the cytoplasm. The protein resides in the cytosol. May be a signaling adapter molecule involved in NGFR/p75NTR-mediated apoptosis induced by NGF. Plays a role in zinc-triggered neuronal death. In absence of reductive stress, acts as a pseudosubstrate for the CRL2(FEM1B) complex: associates with FEM1B via zinc, thereby preventing association between FEM1B and its substrates. This chain is Protein BEX3, found in Homo sapiens (Human).